A 325-amino-acid chain; its full sequence is DNA-directed RNA polymerase subunit alpha (325 aa).

An alpha N-terminal domain (alpha-NTD) region spans residues 1–238 (MSPKNLLKGF…DHLTVFINFE (238 aa)). An alpha C-terminal domain (alpha-CTD) region spans residues 255–325 (LKAALSKHVE…MGLSFGMRDF (71 aa)).

Belongs to the RNA polymerase alpha chain family. Homodimer. The RNAP catalytic core consists of 2 alpha, 1 beta, 1 beta' and 1 omega subunit. When a sigma factor is associated with the core the holoenzyme is formed, which can initiate transcription.

It carries out the reaction RNA(n) + a ribonucleoside 5'-triphosphate = RNA(n+1) + diphosphate. Its function is as follows. DNA-dependent RNA polymerase catalyzes the transcription of DNA into RNA using the four ribonucleoside triphosphates as substrates. This is DNA-directed RNA polymerase subunit alpha from Leptospira biflexa serovar Patoc (strain Patoc 1 / Ames).